A 121-amino-acid chain; its full sequence is uncharacterized protein (121 aa).

Residues 12–24 (EEGGASAAAPDAS) are compositionally biased toward low complexity. Disordered regions lie at residues 12–63 (EEGG…RLEP) and 101–121 (KKLA…SPVV). A compositionally biased stretch (basic residues) spans 26 to 35 (KSKKGARPCF). The segment covering 40 to 49 (QAGSCMTGRQ) has biased composition (polar residues). Residues 112 to 121 (GSQKERSPVV) show a composition bias toward basic and acidic residues.

This is an uncharacterized protein from Homo sapiens (Human).